Here is a 250-residue protein sequence, read N- to C-terminus: uncharacterized protein (250 aa).

The N-terminal stretch at 1-25 (MKTLRTLCVLMILSGVIFFGLKIDA) is a signal peptide.

This is an uncharacterized protein from Bacillus subtilis (strain 168).